Consider the following 766-residue polypeptide: Protein translocase subunit SecA 2 (766 aa).

ATP-binding positions include Gln-84, Gly-102 to Thr-106, and Asp-490.

This sequence belongs to the SecA family. As to quaternary structure, monomer and homodimer. Part of the essential Sec protein translocation apparatus which comprises SecA, SecYEG and auxiliary proteins SecDF. Other proteins may also be involved.

It localises to the cell membrane. The protein localises to the cytoplasm. It catalyses the reaction ATP + H2O + cellular proteinSide 1 = ADP + phosphate + cellular proteinSide 2.. Functionally, part of the Sec protein translocase complex. Interacts with the SecYEG preprotein conducting channel. Has a central role in coupling the hydrolysis of ATP to the transfer of proteins into and across the cell membrane, serving as an ATP-driven molecular motor driving the stepwise translocation of polypeptide chains across the membrane. The polypeptide is Protein translocase subunit SecA 2 (Thermobifida fusca (strain YX)).